The primary structure comprises 376 residues: Phosphoglycerate kinase (376 aa).

Residues valine 1, aspartate 2, phenylalanine 3, asparagine 4, arginine 17, serine 40, histidine 41, glycine 43, arginine 44, leucine 99, arginine 100, histidine 147, and arginine 148 each coordinate (2R)-3-phosphoglycerate. Glycine 191 contributes to the ADP binding site. Glycine 191 lines the CDP pocket. AMP contacts are provided by alanine 192 and lysine 193. Alanine 192 is a binding site for ATP. Alanine 192 serves as a coordination point for Mg(2+). Aspartate 196 provides a ligand contact to CDP. A Mg(2+)-binding site is contributed by aspartate 196. Residue lysine 197 participates in AMP binding. Lysine 197 provides a ligand contact to ATP. Glycine 215 is a binding site for ADP. Residue glycine 215 participates in CDP binding. Residues glycine 216 and glycine 290 each coordinate AMP. The ATP site is built by glycine 216 and glycine 290. Residues glycine 315 and phenylalanine 320 each coordinate CDP. An ADP-binding site is contributed by phenylalanine 320. Residue glutamate 321 coordinates AMP. Residues glutamate 321, aspartate 352, and threonine 353 each coordinate ATP. Aspartate 352 is a binding site for Mg(2+).

It belongs to the phosphoglycerate kinase family. Monomer. It depends on Mg(2+) as a cofactor.

The catalysed reaction is (2R)-3-phosphoglycerate + ATP = (2R)-3-phospho-glyceroyl phosphate + ADP. It participates in carbohydrate degradation; glycolysis; pyruvate from D-glyceraldehyde 3-phosphate: step 2/5. This is Phosphoglycerate kinase (PGK) from Glaucoma chattoni.